Reading from the N-terminus, the 364-residue chain is tRNA/tmRNA (uracil-C(5))-methyltransferase (364 aa).

S-adenosyl-L-methionine-binding residues include Gln-189, Tyr-216, Asn-221, Glu-237, and Asp-297. Residue Cys-322 is the Nucleophile of the active site. Glu-356 acts as the Proton acceptor in catalysis.

It belongs to the class I-like SAM-binding methyltransferase superfamily. RNA M5U methyltransferase family. TrmA subfamily.

The catalysed reaction is uridine(54) in tRNA + S-adenosyl-L-methionine = 5-methyluridine(54) in tRNA + S-adenosyl-L-homocysteine + H(+). It catalyses the reaction uridine(341) in tmRNA + S-adenosyl-L-methionine = 5-methyluridine(341) in tmRNA + S-adenosyl-L-homocysteine + H(+). Dual-specificity methyltransferase that catalyzes the formation of 5-methyluridine at position 54 (m5U54) in all tRNAs, and that of position 341 (m5U341) in tmRNA (transfer-mRNA). This is tRNA/tmRNA (uracil-C(5))-methyltransferase from Campylobacter curvus (strain 525.92).